A 299-amino-acid polypeptide reads, in one-letter code: tRNA dimethylallyltransferase (299 aa).

11 to 18 serves as a coordination point for ATP; it reads GPTAVGKT. 13–18 is a substrate binding site; sequence TAVGKT. The segment at 36–39 is interaction with substrate tRNA; that stretch reads DSQQ.

This sequence belongs to the IPP transferase family. As to quaternary structure, monomer. Mg(2+) is required as a cofactor.

It carries out the reaction adenosine(37) in tRNA + dimethylallyl diphosphate = N(6)-dimethylallyladenosine(37) in tRNA + diphosphate. Functionally, catalyzes the transfer of a dimethylallyl group onto the adenine at position 37 in tRNAs that read codons beginning with uridine, leading to the formation of N6-(dimethylallyl)adenosine (i(6)A). This Streptococcus pyogenes serotype M1 protein is tRNA dimethylallyltransferase.